The following is a 623-amino-acid chain: Glutathione import ATP-binding protein GsiA (623 aa).

ABC transporter domains follow at residues 15 to 269 (VENL…RALL) and 314 to 564 (LRVR…RKLL). ATP-binding positions include 49–56 (GESGSGKS) and 357–364 (GESGSGKS).

Belongs to the ABC transporter superfamily. Glutathione importer (TC 3.A.1.5.11) family. In terms of assembly, the complex is composed of two ATP-binding proteins (GsiA), two transmembrane proteins (GsiC and GsiD) and a solute-binding protein (GsiB).

It is found in the cell inner membrane. It carries out the reaction glutathione(out) + ATP + H2O = glutathione(in) + ADP + phosphate + H(+). Part of the ABC transporter complex GsiABCD involved in glutathione import. Responsible for energy coupling to the transport system. This is Glutathione import ATP-binding protein GsiA from Escherichia coli O1:K1 / APEC.